The following is a 274-amino-acid chain: MSLQHIIEAAFEKRAEITPKTVDAQTRAAIEEAIEGLDSGKYRVAEKIDGEWVTHQWLKKAVLLSFRINDNELVAGSETNYYDKVPMKFAEYDAARFQQEGFRVVPPAAVRKGAYIAKNTVLMPSYVNIGARVDEGTMVDTWATVGSCAQIGKNVHLSGGVGIGGVLEPLQANPTIIEDNCFIGARSEIVEGVIVEEGSVISMGVFIGQSTKIYDRETGEVTYGRVPAGSVVVSGSLPSKCGKYSLYCAVIVKKVDAKTLGKVGINELLRTIDE.

Residues R103 and D140 each contribute to the substrate site.

Belongs to the transferase hexapeptide repeat family. In terms of assembly, homotrimer.

It localises to the cytoplasm. The enzyme catalyses (S)-2,3,4,5-tetrahydrodipicolinate + succinyl-CoA + H2O = (S)-2-succinylamino-6-oxoheptanedioate + CoA. Its pathway is amino-acid biosynthesis; L-lysine biosynthesis via DAP pathway; LL-2,6-diaminopimelate from (S)-tetrahydrodipicolinate (succinylase route): step 1/3. The chain is 2,3,4,5-tetrahydropyridine-2,6-dicarboxylate N-succinyltransferase from Pasteurella multocida (strain Pm70).